A 113-amino-acid polypeptide reads, in one-letter code: Small ribosomal subunit protein bS6 (113 aa).

This sequence belongs to the bacterial ribosomal protein bS6 family.

Functionally, binds together with bS18 to 16S ribosomal RNA. The polypeptide is Small ribosomal subunit protein bS6 (Pseudoalteromonas translucida (strain TAC 125)).